A 476-amino-acid chain; its full sequence is Bifunctional protein HldE (476 aa).

Residues 1-319 (MKITLPEYDK…ANAVYSQQEI (319 aa)) are ribokinase. 196 to 199 (NLAE) serves as a coordination point for ATP. D265 is a catalytic residue. A cytidylyltransferase region spans residues 345 to 476 (MTNGCFDILH…EIIKTIRNNS (132 aa)).

It in the N-terminal section; belongs to the carbohydrate kinase PfkB family. This sequence in the C-terminal section; belongs to the cytidylyltransferase family. As to quaternary structure, homodimer.

The catalysed reaction is D-glycero-beta-D-manno-heptose 7-phosphate + ATP = D-glycero-beta-D-manno-heptose 1,7-bisphosphate + ADP + H(+). It catalyses the reaction D-glycero-beta-D-manno-heptose 1-phosphate + ATP + H(+) = ADP-D-glycero-beta-D-manno-heptose + diphosphate. It participates in nucleotide-sugar biosynthesis; ADP-L-glycero-beta-D-manno-heptose biosynthesis; ADP-L-glycero-beta-D-manno-heptose from D-glycero-beta-D-manno-heptose 7-phosphate: step 1/4. The protein operates within nucleotide-sugar biosynthesis; ADP-L-glycero-beta-D-manno-heptose biosynthesis; ADP-L-glycero-beta-D-manno-heptose from D-glycero-beta-D-manno-heptose 7-phosphate: step 3/4. In terms of biological role, catalyzes the phosphorylation of D-glycero-D-manno-heptose 7-phosphate at the C-1 position to selectively form D-glycero-beta-D-manno-heptose-1,7-bisphosphate. Functionally, catalyzes the ADP transfer from ATP to D-glycero-beta-D-manno-heptose 1-phosphate, yielding ADP-D-glycero-beta-D-manno-heptose. In Psychromonas ingrahamii (strain DSM 17664 / CCUG 51855 / 37), this protein is Bifunctional protein HldE.